A 61-amino-acid chain; its full sequence is Probable tautomerase SERP0934 (61 aa).

Proline 2 serves as the catalytic Proton acceptor; via imino nitrogen.

It belongs to the 4-oxalocrotonate tautomerase family.

In Staphylococcus epidermidis (strain ATCC 35984 / DSM 28319 / BCRC 17069 / CCUG 31568 / BM 3577 / RP62A), this protein is Probable tautomerase SERP0934.